The chain runs to 37 residues: Potassium channel toxin alpha-KTx 3.13 (37 aa).

3 disulfide bridges follow: C7-C27, C13-C32, and C17-C34. K37 carries the post-translational modification Lysine amide.

The protein belongs to the short scorpion toxin superfamily. Potassium channel inhibitor family. Alpha-KTx 03 subfamily. In terms of tissue distribution, expressed by the venom gland.

The protein localises to the secreted. In terms of biological role, blocks voltage-gated potassium channels Kv1.1/KCNA1 (IC(50)=203.15 pM), Kv1.2/KCNA2 (IC(50)=8.92 nM) from rat and human Kv1.3 KCNA3/KCNA3 (IC(50)=171 pM) potently. At 2 uM, also blocks Shaker IR and has a moderate effect on rat Kv1.6/KCNA6. This chain is Potassium channel toxin alpha-KTx 3.13, found in Mesobuthus eupeus (Lesser Asian scorpion).